The following is a 368-amino-acid chain: D-alanine--D-alanine ligase (368 aa).

In terms of domain architecture, ATP-grasp spans 151-358; the sequence is KKLLAAEGLP…YGTLVSTLVD (208 aa). 179-234 is a binding site for ATP; sequence KSRLHLPVFVKPARGGSSIGITRVAEWAALDDAIAHARLHDPKVIVESGIIGREVE. Mg(2+) contacts are provided by D313, E325, and N327.

The protein belongs to the D-alanine--D-alanine ligase family. Mg(2+) serves as cofactor. Requires Mn(2+) as cofactor.

It is found in the cytoplasm. It catalyses the reaction 2 D-alanine + ATP = D-alanyl-D-alanine + ADP + phosphate + H(+). The protein operates within cell wall biogenesis; peptidoglycan biosynthesis. In terms of biological role, cell wall formation. This Rhodococcus jostii (strain RHA1) protein is D-alanine--D-alanine ligase.